Here is a 108-residue protein sequence, read N- to C-terminus: N(4)-acetylcytidine amidohydrolase (108 aa).

The region spanning 5 to 102 (ITFFQRLERS…NDLFFISFRV (98 aa)) is the ASCH domain. K20 serves as the catalytic Proton acceptor. The Nucleophile role is filled by T23. E73 functions as the Proton donor in the catalytic mechanism.

This sequence belongs to the N(4)-acetylcytidine amidohydrolase family.

It catalyses the reaction N(4)-acetylcytidine + H2O = cytidine + acetate + H(+). The catalysed reaction is N(4)-acetyl-2'-deoxycytidine + H2O = 2'-deoxycytidine + acetate + H(+). It carries out the reaction N(4)-acetylcytosine + H2O = cytosine + acetate + H(+). Its function is as follows. Catalyzes the hydrolysis of N(4)-acetylcytidine (ac4C). The sequence is that of N(4)-acetylcytidine amidohydrolase from Moritella marina (Vibrio marinus).